Reading from the N-terminus, the 379-residue chain is Chaperone protein DnaJ (379 aa).

The J domain occupies 5–69 (EFYDRLGVSK…QKRAAYDQYG (65 aa)). The CR-type zinc-finger motif lies at 135-217 (GAEKEVSYNR…CHGTGHEKKT (83 aa)). The Zn(2+) site is built by Cys148, Cys151, Cys165, Cys168, Cys191, Cys194, Cys205, and Cys208. 4 CXXCXGXG motif repeats span residues 148–155 (CHTCSGSG), 165–172 (CQKCHGSG), 191–198 (CDVCQGSG), and 205–212 (CPTCHGTG).

It belongs to the DnaJ family. In terms of assembly, homodimer. The cofactor is Zn(2+).

Its subcellular location is the cytoplasm. In terms of biological role, participates actively in the response to hyperosmotic and heat shock by preventing the aggregation of stress-denatured proteins and by disaggregating proteins, also in an autonomous, DnaK-independent fashion. Unfolded proteins bind initially to DnaJ; upon interaction with the DnaJ-bound protein, DnaK hydrolyzes its bound ATP, resulting in the formation of a stable complex. GrpE releases ADP from DnaK; ATP binding to DnaK triggers the release of the substrate protein, thus completing the reaction cycle. Several rounds of ATP-dependent interactions between DnaJ, DnaK and GrpE are required for fully efficient folding. Also involved, together with DnaK and GrpE, in the DNA replication of plasmids through activation of initiation proteins. This chain is Chaperone protein DnaJ, found in Streptococcus agalactiae serotype III (strain NEM316).